The chain runs to 217 residues: Small ribosomal subunit protein uS3 (217 aa).

One can recognise a KH type-2 domain in the interval 38 to 106; that stretch reads IRKFVQKELA…QVHINIIEIK (69 aa).

Belongs to the universal ribosomal protein uS3 family. As to quaternary structure, part of the 30S ribosomal subunit. Forms a tight complex with proteins S10 and S14.

Its function is as follows. Binds the lower part of the 30S subunit head. Binds mRNA in the 70S ribosome, positioning it for translation. The polypeptide is Small ribosomal subunit protein uS3 (Streptococcus gordonii (strain Challis / ATCC 35105 / BCRC 15272 / CH1 / DL1 / V288)).